We begin with the raw amino-acid sequence, 286 residues long: Putative inorganic pyrophosphatase C3A12.02 (286 aa).

Arg85 is a binding site for diphosphate. Residues Asp122, Asp127, and Asp159 each coordinate Mg(2+).

It belongs to the PPase family. Mg(2+) serves as cofactor.

The protein resides in the cytoplasm. The enzyme catalyses diphosphate + H2O = 2 phosphate + H(+). The chain is Putative inorganic pyrophosphatase C3A12.02 from Schizosaccharomyces pombe (strain 972 / ATCC 24843) (Fission yeast).